An 862-amino-acid chain; its full sequence is Rab GTPase-binding effector protein 1 (862 aa).

An N-acetylalanine modification is found at A2. Residues 11–328 (DVSLQQRVAE…KDQEEDEQQR (318 aa)) are a coiled coil. The residue at position 282 (K282) is an N6-acetyllysine. Disordered regions lie at residues 315–340 (ELKKKDQEEDEQQRINKGKDNKKIDT) and 355–374 (EESSTPLSNEEEHLDSTHGS). Residues S374, S377, and S407 each carry the phosphoserine modification. At T408 the chain carries Phosphothreonine. Phosphoserine is present on S410. Residues 534–816 (DMCSNYEKQL…LQTELDVSEQ (283 aa)) adopt a coiled-coil conformation.

Belongs to the rabaptin family. Heterodimer with RABGEF1. The heterodimer binds RAB4A and RAB5A that have been activated by GTP-binding. Interacts with TSC2. Interacts with GGA1 (via GAE domain), GGA2 (via GAE domain) and GGA3 (via GAE domain). Interacts with AP1G1 (via GAE domain). Interacts with AP1G2 (via GAE domain). Interacts with ECPAS. Interacts with KCNH1. Interacts with PKD1 (via C-terminal domain) and GGA1; the interactions recruit PKD1:PKD2 complex to GGA1 and ARL3 at trans-Golgi network. Interacts with KCNH1. Proteolytic cleavage by caspases in apoptotic cells causes loss of endosome fusion activity.

Its subcellular location is the cytoplasm. It is found in the early endosome. The protein resides in the recycling endosome. The protein localises to the cytoplasmic vesicle. Functionally, rab effector protein acting as linker between gamma-adaptin, RAB4A and RAB5A. Involved in endocytic membrane fusion and membrane trafficking of recycling endosomes. Involved in KCNH1 channels trafficking to and from the cell membrane. Stimulates RABGEF1 mediated nucleotide exchange on RAB5A. Mediates the traffic of PKD1:PKD2 complex from the endoplasmic reticulum through the Golgi to the cilium. In Rattus norvegicus (Rat), this protein is Rab GTPase-binding effector protein 1 (Rabep1).